The chain runs to 74 residues: UPF0352 protein HAPS_0210 (74 aa).

Belongs to the UPF0352 family.

The chain is UPF0352 protein HAPS_0210 from Glaesserella parasuis serovar 5 (strain SH0165) (Haemophilus parasuis).